Reading from the N-terminus, the 122-residue chain is UPF0382 membrane protein SE_0353 (122 aa).

4 helical membrane passes run 3–23 (VFIILGALNAMMAVGTGAFGA), 46–66 (MYHGLGLLVIGLISGTTSINV), 69–89 (AGWLLFFGIVFFSGSLYFLAL), and 98–118 (ITPIGGVLFIIGWLVLVIATL).

The protein belongs to the UPF0382 family.

It localises to the cell membrane. This is UPF0382 membrane protein SE_0353 from Staphylococcus epidermidis (strain ATCC 12228 / FDA PCI 1200).